Here is a 198-residue protein sequence, read N- to C-terminus: Elongation factor Ts (198 aa).

The tract at residues 81–84 (TDFV) is involved in Mg(2+) ion dislocation from EF-Tu.

This sequence belongs to the EF-Ts family.

Its subcellular location is the cytoplasm. Associates with the EF-Tu.GDP complex and induces the exchange of GDP to GTP. It remains bound to the aminoacyl-tRNA.EF-Tu.GTP complex up to the GTP hydrolysis stage on the ribosome. The protein is Elongation factor Ts of Dictyoglomus turgidum (strain DSM 6724 / Z-1310).